A 239-amino-acid polypeptide reads, in one-letter code: Serine protease SplF (239 aa).

Residues 1-36 (MNKNIIIKSIAALTILTSVTGVGTTMVEGIQQTAKA) form the signal peptide. Active-site charge relay system residues include His75, Asp114, and Ser192.

The protein belongs to the peptidase S1B family.

The protein resides in the secreted. In Staphylococcus aureus (strain Mu50 / ATCC 700699), this protein is Serine protease SplF (splF).